We begin with the raw amino-acid sequence, 311 residues long: tRNA N6-adenosine threonylcarbamoyltransferase (311 aa).

Residues histidine 108 and histidine 112 each coordinate Fe cation. Residues 130-134 (LVSGG), aspartate 163, glycine 176, aspartate 180, and asparagine 270 contribute to the substrate site. A Fe cation-binding site is contributed by aspartate 294.

It belongs to the KAE1 / TsaD family. Fe(2+) serves as cofactor.

The protein resides in the cytoplasm. It catalyses the reaction L-threonylcarbamoyladenylate + adenosine(37) in tRNA = N(6)-L-threonylcarbamoyladenosine(37) in tRNA + AMP + H(+). In terms of biological role, required for the formation of a threonylcarbamoyl group on adenosine at position 37 (t(6)A37) in tRNAs that read codons beginning with adenine. Is involved in the transfer of the threonylcarbamoyl moiety of threonylcarbamoyl-AMP (TC-AMP) to the N6 group of A37, together with TsaE and TsaB. TsaD likely plays a direct catalytic role in this reaction. This chain is tRNA N6-adenosine threonylcarbamoyltransferase, found in Metamycoplasma arthritidis (strain 158L3-1) (Mycoplasma arthritidis).